Consider the following 107-residue polypeptide: MLATTTPTIEGKRITKYYGIVTGETIIGANLFRDFFASIRDIVGGRSGSYEEVLRQAKDTALREMQDQAALLGANAVVGVDLDYETVGDSGSMLMVTASGTAVRIED.

The protein belongs to the UPF0145 family.

The sequence is that of UPF0145 protein BVU_2335 from Phocaeicola vulgatus (strain ATCC 8482 / DSM 1447 / JCM 5826 / CCUG 4940 / NBRC 14291 / NCTC 11154) (Bacteroides vulgatus).